The sequence spans 647 residues: Epithelial sodium channel subunit beta (647 aa).

Residues 1–57 (MIHGKMKRLKRYFTRALHRIQKGPGYTYKELLVWFCDNTNTHGPKRIIKEGPKKRVM) are Cytoplasmic-facing. A helical membrane pass occupies residues 58-78 (WFILTLVFAGLVFWQWGVLIL). Over 79–552 (TYLSYGVSVS…GGQFGFWMGG (474 aa)) the chain is Extracellular. Intrachain disulfides connect Cys104–Cys291, Cys215–Cys222, Cys268–Cys275, Cys381–Cys468, Cys406–Cys464, Cys410–Cys460, Cys419–Cys446, and Cys421–Cys435. A helical transmembrane segment spans residues 553–573 (SVLCIIEFGEIIIDCMWITIL). At 574–647 (KFLAWSRNRR…AEPVSSDEEN (74 aa)) the chain is on the cytoplasmic side. The interval 586-647 (RKRPQYSDPP…AEPVSSDEEN (62 aa)) is disordered.

It belongs to the amiloride-sensitive sodium channel (TC 1.A.6) family. SCNN1B subfamily. As to quaternary structure, component of the heterotrimeric epithelial sodium channel (ENaC) composed of an alpha/SCNN1A, a beta/SCNN1B and a gamma/SCNN1G subunit.

The protein localises to the apical cell membrane. It is found in the cytoplasmic vesicle membrane. The catalysed reaction is Na(+)(in) = Na(+)(out). Originally identified and characterized by its inhibition by the diuretic drug amiloride. This is one of the three pore-forming subunits of the heterotrimeric epithelial sodium channel (ENaC), a critical regulator of sodium balance and fluid homeostasis. ENaC operates in epithelial tissues, where it mediates the electrodiffusion of sodium ions from extracellular fluid through the apical membrane of cells, with water following osmotically. In Xenopus laevis (African clawed frog), this protein is Epithelial sodium channel subunit beta (scnn1b-a).